Here is a 539-residue protein sequence, read N- to C-terminus: CTP synthase (539 aa).

An amidoligase domain region spans residues Met1–Leu267. Ser13 contributes to the CTP binding site. Position 13 (Ser13) interacts with UTP. Ser14 to Ile19 lines the ATP pocket. Tyr54 is an L-glutamine binding site. Position 71 (Asp71) interacts with ATP. Mg(2+) contacts are provided by Asp71 and Glu141. CTP-binding positions include Asp148–Glu150, Lys188–Gln193, and Lys224. UTP is bound by residues Lys188–Gln193 and Lys224. An ATP-binding site is contributed by Arg240–Ala242. The 243-residue stretch at Thr293 to Ala535 folds into the Glutamine amidotransferase type-1 domain. An L-glutamine-binding site is contributed by Gly355. The active-site Nucleophile; for glutamine hydrolysis is the Cys382. Residues Leu383–Gln386, Glu406, and Arg463 each bind L-glutamine. Residues His508 and Glu510 contribute to the active site.

It belongs to the CTP synthase family. In terms of assembly, homotetramer.

The catalysed reaction is UTP + L-glutamine + ATP + H2O = CTP + L-glutamate + ADP + phosphate + 2 H(+). The enzyme catalyses L-glutamine + H2O = L-glutamate + NH4(+). It catalyses the reaction UTP + NH4(+) + ATP = CTP + ADP + phosphate + 2 H(+). It participates in pyrimidine metabolism; CTP biosynthesis via de novo pathway; CTP from UDP: step 2/2. Its activity is regulated as follows. Allosterically activated by GTP, when glutamine is the substrate; GTP has no effect on the reaction when ammonia is the substrate. The allosteric effector GTP functions by stabilizing the protein conformation that binds the tetrahedral intermediate(s) formed during glutamine hydrolysis. Inhibited by the product CTP, via allosteric rather than competitive inhibition. Its function is as follows. Catalyzes the ATP-dependent amination of UTP to CTP with either L-glutamine or ammonia as the source of nitrogen. Regulates intracellular CTP levels through interactions with the four ribonucleotide triphosphates. This is CTP synthase from Staphylococcus carnosus (strain TM300).